The sequence spans 83 residues: Small ribosomal subunit protein eS21 (83 aa).

The protein belongs to the eukaryotic ribosomal protein eS21 family. As to quaternary structure, component of the 40S small ribosomal subunit. Interacts with sta.

Its subcellular location is the cytoplasm. The protein localises to the cytosol. It is found in the rough endoplasmic reticulum. May be an associated component of the ribosome rather than a core structural subunit. May act as a translation initiation factor. Has a role in regulation of cell proliferation in the hematopoietic organs and the imaginal disks of larva. The sequence is that of Small ribosomal subunit protein eS21 (RpS21) from Drosophila simulans (Fruit fly).